The following is a 113-amino-acid chain: Hydrogenase maturation factor HypA (113 aa).

His2 is a Ni(2+) binding site. Zn(2+) contacts are provided by Cys73, Cys76, Cys89, and Cys92.

This sequence belongs to the HypA/HybF family.

In terms of biological role, involved in the maturation of [NiFe] hydrogenases. Required for nickel insertion into the metal center of the hydrogenase. The sequence is that of Hydrogenase maturation factor HypA from Dechloromonas aromatica (strain RCB).